A 308-amino-acid polypeptide reads, in one-letter code: Elongation factor Ts (308 aa).

The interval 80 to 83 (TDFV) is involved in Mg(2+) ion dislocation from EF-Tu.

This sequence belongs to the EF-Ts family.

Its subcellular location is the cytoplasm. Functionally, associates with the EF-Tu.GDP complex and induces the exchange of GDP to GTP. It remains bound to the aminoacyl-tRNA.EF-Tu.GTP complex up to the GTP hydrolysis stage on the ribosome. The protein is Elongation factor Ts of Rhodopseudomonas palustris (strain BisB5).